Here is a 445-residue protein sequence, read N- to C-terminus: GTPase Der (445 aa).

EngA-type G domains lie at Pro3–Gln167 and Ile180–Met353. GTP contacts are provided by residues Gly9–Ser16, Asp56–Phe60, Asn119–Glu122, Gly186–Ser193, Asp233–Leu237, and Asn298–Asp301. Residues Ala354–Thr438 form the KH-like domain.

The protein belongs to the TRAFAC class TrmE-Era-EngA-EngB-Septin-like GTPase superfamily. EngA (Der) GTPase family. In terms of assembly, associates with the 50S ribosomal subunit.

Its function is as follows. GTPase that plays an essential role in the late steps of ribosome biogenesis. The sequence is that of GTPase Der from Burkholderia multivorans (strain ATCC 17616 / 249).